Reading from the N-terminus, the 202-residue chain is Small ribosomal subunit protein uS2 (202 aa).

It belongs to the universal ribosomal protein uS2 family. As to quaternary structure, part of the 30S ribosomal subunit.

In Pyrococcus furiosus (strain ATCC 43587 / DSM 3638 / JCM 8422 / Vc1), this protein is Small ribosomal subunit protein uS2.